Here is a 175-residue protein sequence, read N- to C-terminus: Thermoresistant gluconokinase (175 aa).

Residue 15–22 coordinates ATP; the sequence is GVSGSGKS.

This sequence belongs to the gluconokinase GntK/GntV family.

The enzyme catalyses D-gluconate + ATP = 6-phospho-D-gluconate + ADP + H(+). The protein operates within carbohydrate acid metabolism; D-gluconate degradation. This is Thermoresistant gluconokinase (gntK) from Escherichia coli (strain K12).